The sequence spans 20 residues: Zinc metalloproteinase-disintegrin-like uracoina-1 (20 aa).

Belongs to the venom metalloproteinase (M12B) family. P-III subfamily. Monomer. Requires Zn(2+) as cofactor. In terms of tissue distribution, expressed by the venom gland.

It localises to the secreted. Inhibited by ethylenediaminetetraacetic acid (EDTA) and 1,10-phenanthroline. Not inhibited by tosyl-L-lysine chloromethyl ketone (TCLK) and phenylmethanesulfonylfluoride (PMSF). Its function is as follows. Snake venom zinc metalloprotease that possesses hemorrhagic activity (minimum hemorrhagic dose, MHD=4.7 ug) when injected intradermally into mice. Degrades the alpha-chain of fibrinogen (FGA). The sequence is that of Zinc metalloproteinase-disintegrin-like uracoina-1 from Crotalus vegrandis (Uracoan rattlesnake).